A 1409-amino-acid polypeptide reads, in one-letter code: DNA-directed RNA polymerase subunit beta' (1409 aa).

Zn(2+) contacts are provided by Cys-72, Cys-74, Cys-87, and Cys-90. The Mg(2+) site is built by Asp-462, Asp-464, and Asp-466. The Zn(2+) site is built by Cys-816, Cys-890, Cys-897, and Cys-900.

It belongs to the RNA polymerase beta' chain family. As to quaternary structure, the RNAP catalytic core consists of 2 alpha, 1 beta, 1 beta' and 1 omega subunit. When a sigma factor is associated with the core the holoenzyme is formed, which can initiate transcription. Requires Mg(2+) as cofactor. Zn(2+) serves as cofactor.

The catalysed reaction is RNA(n) + a ribonucleoside 5'-triphosphate = RNA(n+1) + diphosphate. Functionally, DNA-dependent RNA polymerase catalyzes the transcription of DNA into RNA using the four ribonucleoside triphosphates as substrates. This is DNA-directed RNA polymerase subunit beta' from Aromatoleum aromaticum (strain DSM 19018 / LMG 30748 / EbN1) (Azoarcus sp. (strain EbN1)).